The following is a 141-amino-acid chain: Cystatin-S (141 aa).

Positions 1–27 are cleaved as a signal peptide; the sequence is MAYLLHAQLFLLTTFILVLNMRLCPVL. A Secondary area of contact motif is present at residues 76-80; it reads QVVAG. 2 disulfide bridges follow: Cys-94–Cys-104 and Cys-118–Cys-138.

Belongs to the cystatin family. In terms of tissue distribution, found in saliva, tears, urine and seminal fluid.

It is found in the secreted. This protein strongly inhibits papain and ficin, partially inhibits stem bromelain and bovine cathepsin C, but does not inhibit porcine cathepsin B or clostripain. Papain is inhibited non-competitively. This chain is Cystatin-S (Cst4), found in Rattus norvegicus (Rat).